The following is a 670-amino-acid chain: DNA mismatch repair protein MutL (670 aa).

Residues 363–451 form a disordered region; that stretch reads SFDRGRPLSR…RAAGGPASTH (89 aa). Residues 379–389 are compositionally biased toward basic and acidic residues; it reads ERWRERHRPDA.

It belongs to the DNA mismatch repair MutL/HexB family.

Its function is as follows. This protein is involved in the repair of mismatches in DNA. It is required for dam-dependent methyl-directed DNA mismatch repair. May act as a 'molecular matchmaker', a protein that promotes the formation of a stable complex between two or more DNA-binding proteins in an ATP-dependent manner without itself being part of a final effector complex. This Syntrophobacter fumaroxidans (strain DSM 10017 / MPOB) protein is DNA mismatch repair protein MutL.